The chain runs to 247 residues: Adenosylcobinamide-GDP ribazoletransferase (247 aa).

Transmembrane regions (helical) follow at residues 34–54, 59–79, 113–133, 138–158, and 194–214; these read IITF…VFMV, CGAP…TGGF, GGLA…ELAL, ILAS…LLMY, and VLLP…AIFI.

Belongs to the CobS family. Requires Mg(2+) as cofactor.

The protein resides in the cell inner membrane. The catalysed reaction is alpha-ribazole + adenosylcob(III)inamide-GDP = adenosylcob(III)alamin + GMP + H(+). It catalyses the reaction alpha-ribazole 5'-phosphate + adenosylcob(III)inamide-GDP = adenosylcob(III)alamin 5'-phosphate + GMP + H(+). It functions in the pathway cofactor biosynthesis; adenosylcobalamin biosynthesis; adenosylcobalamin from cob(II)yrinate a,c-diamide: step 7/7. Functionally, joins adenosylcobinamide-GDP and alpha-ribazole to generate adenosylcobalamin (Ado-cobalamin). Also synthesizes adenosylcobalamin 5'-phosphate from adenosylcobinamide-GDP and alpha-ribazole 5'-phosphate. The chain is Adenosylcobinamide-GDP ribazoletransferase from Escherichia coli O157:H7.